We begin with the raw amino-acid sequence, 331 residues long: L-lactate dehydrogenase A chain (331 aa).

Residues 29 to 57 (GMVG…MEDK) and arginine 98 each bind NAD(+). Substrate is bound by residues arginine 105, asparagine 137, and arginine 168. Asparagine 137 serves as a coordination point for NAD(+). Histidine 192 acts as the Proton acceptor in catalysis. A substrate-binding site is contributed by threonine 247.

The protein belongs to the LDH/MDH superfamily. LDH family. Homotetramer.

It localises to the cytoplasm. It carries out the reaction (S)-lactate + NAD(+) = pyruvate + NADH + H(+). The protein operates within fermentation; pyruvate fermentation to lactate; (S)-lactate from pyruvate: step 1/1. Functionally, interconverts simultaneously and stereospecifically pyruvate and lactate with concomitant interconversion of NADH and NAD(+). This chain is L-lactate dehydrogenase A chain (ldha), found in Harpagifer antarcticus (Antarctic spiny plunderfish).